The following is a 488-amino-acid chain: Glutamyl-tRNA(Gln) amidotransferase subunit A (488 aa).

Catalysis depends on charge relay system residues K77 and S152. The Acyl-ester intermediate role is filled by S176.

The protein belongs to the amidase family. GatA subfamily. As to quaternary structure, heterotrimer of A, B and C subunits.

The enzyme catalyses L-glutamyl-tRNA(Gln) + L-glutamine + ATP + H2O = L-glutaminyl-tRNA(Gln) + L-glutamate + ADP + phosphate + H(+). Allows the formation of correctly charged Gln-tRNA(Gln) through the transamidation of misacylated Glu-tRNA(Gln) in organisms which lack glutaminyl-tRNA synthetase. The reaction takes place in the presence of glutamine and ATP through an activated gamma-phospho-Glu-tRNA(Gln). This is Glutamyl-tRNA(Gln) amidotransferase subunit A from Streptococcus gordonii (strain Challis / ATCC 35105 / BCRC 15272 / CH1 / DL1 / V288).